The chain runs to 513 residues: Ribonuclease Y (513 aa).

A helical transmembrane segment spans residues 6-26 (YIIIAVVIIIICVILGLYVVD). The KH domain maps to 203 to 288 (TVHVVNLPND…EMVEKAKKEV (86 aa)). Residues 329 to 422 (VLKHSIEVSH…VQAADAISAA (94 aa)) form the HD domain.

This sequence belongs to the RNase Y family.

It localises to the cell membrane. Endoribonuclease that initiates mRNA decay. The sequence is that of Ribonuclease Y from Clostridium botulinum (strain Loch Maree / Type A3).